The primary structure comprises 371 residues: Opine oxidase subunit B (371 aa).

As to quaternary structure, heterodimer of a subunit A and a subunit B.

It participates in opine metabolism; octopine degradation. Its function is as follows. Oxidative cleavage of octopine into L-arginine and pyruvate. This is Opine oxidase subunit B (ooxB) from Agrobacterium tumefaciens (strain Ach5).